Here is a 112-residue protein sequence, read N- to C-terminus: T cell receptor alpha variable 9-2 (112 aa).

The signal sequence occupies residues 1–20 (MNYSPGLVSLILLLLGRTRG). Residues 21–112 (DSVTQMEGPV…DSAVYFCALS (92 aa)) form the Ig-like domain. An N-linked (GlcNAc...) asparagine glycan is attached at N41. C42 and C109 form a disulfide bridge.

Alpha-beta TR is a heterodimer composed of an alpha and beta chain; disulfide-linked. The alpha-beta TR is associated with the transmembrane signaling CD3 coreceptor proteins to form the TR-CD3 (TcR or TCR). The assembly of alpha-beta TR heterodimers with CD3 occurs in the endoplasmic reticulum where a single alpha-beta TR heterodimer associates with one CD3D-CD3E heterodimer, one CD3G-CD3E heterodimer and one CD247 homodimer forming a stable octameric structure. CD3D-CD3E and CD3G-CD3E heterodimers preferentially associate with TR alpha and TR beta chains, respectively. The association of the CD247 homodimer is the last step of TcR assembly in the endoplasmic reticulum and is required for transport to the cell surface.

The protein localises to the cell membrane. Its function is as follows. V region of the variable domain of T cell receptor (TR) alpha chain that participates in the antigen recognition. Alpha-beta T cell receptors are antigen specific receptors which are essential to the immune response and are present on the cell surface of T lymphocytes. Recognize peptide-major histocompatibility (MH) (pMH) complexes that are displayed by antigen presenting cells (APC), a prerequisite for efficient T cell adaptive immunity against pathogens. Binding of alpha-beta TR to pMH complex initiates TR-CD3 clustering on the cell surface and intracellular activation of LCK that phosphorylates the ITAM motifs of CD3G, CD3D, CD3E and CD247 enabling the recruitment of ZAP70. In turn ZAP70 phosphorylates LAT, which recruits numerous signaling molecules to form the LAT signalosome. The LAT signalosome propagates signal branching to three major signaling pathways, the calcium, the mitogen-activated protein kinase (MAPK) kinase and the nuclear factor NF-kappa-B (NF-kB) pathways, leading to the mobilization of transcription factors that are critical for gene expression and essential for T cell growth and differentiation. The T cell repertoire is generated in the thymus, by V-(D)-J rearrangement. This repertoire is then shaped by intrathymic selection events to generate a peripheral T cell pool of self-MH restricted, non-autoaggressive T cells. Post-thymic interaction of alpha-beta TR with the pMH complexes shapes TR structural and functional avidity. The protein is T cell receptor alpha variable 9-2 of Homo sapiens (Human).